The primary structure comprises 803 residues: MKRIFGIFIFLSLLLFLVPLLASCTKEKQVYIVYFGEHKGDKAFHEIEAHHHSYLQSVKETEEDATSSLLYRRASSINGFAAELTPDQASRLKELKEVVSVFKSDPRKYKIHTTRSWEFVGLKEEEGEDYRSDGDAPRHKYDVNDRFRVGRKFLKNAKHGDGVIVGLIDSGVWPESRSFDDKGMGPIPESWKGICQTGVAFNSSHCNRKIIGARYYARGYERYYGPFNAEANKDFLSPRDADGHGSHTASTAVGRRVDGVSALGGIAMGTASGGASLARLAVYKACWAVPNKEKYATNTCFDEDMLAAFDDAIADGVNVISISIGTVEPHTYLEDGIAIGALHAVKRDIVVAASAGNDGPARETLSNPAPWIITVGASSLDRFFVGRLELGDGYVFESDSLTTLKMDNYAPLVYAPDVVVPGVSRNDAMLCLPNALSPDHVRGKVVLCLRGYGSGSTIGKGLEVKRAGGVGMILANSRDNDAFDVESHFVPTALVFSSTVDRILDYIYNTYEPVAFIKPAETVLYRNQPEDSVYPFSSRAPNWVDANILKPDIIAPGLNILAAWSGADSASKDSIDRRVLDYNLDSGTSMSCPHVAGAIALLKSMHPTWSSAAIRSALMTTASMTNEDNEPIQDYDGSPANPFALGSRHFRPTKAASPGLVYDASYQSYLLYCCSVGLTNLDPTFKCPSRIPPGYNLNYPSISIPYLSGTVTVTRTVTCVGRTGNSTSVYVFNAQPPNGVLVKAEPNVLVFDKIGQKKRFNIIFTTQRYEFTGEARRDRYRFGWFSWTDGHHVVRSSIAVSLV.

Positions 1–22 (MKRIFGIFIFLSLLLFLVPLLA) are cleaved as a signal peptide. The propeptide at 23 to 112 (SCTKEKQVYI…KSDPRKYKIH (90 aa)) is activation peptide. Positions 30-108 (VYIVYFGEHK…VSVFKSDPRK (79 aa)) constitute an Inhibitor I9 domain. The 517-residue stretch at 140-656 (KYDVNDRFRV…SRHFRPTKAA (517 aa)) folds into the Peptidase S8 domain. Residue aspartate 169 is the Charge relay system of the active site. The N-linked (GlcNAc...) asparagine glycan is linked to asparagine 202. Histidine 244 (charge relay system) is an active-site residue. In terms of domain architecture, PA spans 409 to 504 (YAPLVYAPDV…VFSSTVDRIL (96 aa)). The active-site Charge relay system is serine 589. The N-linked (GlcNAc...) asparagine glycan is linked to asparagine 725.

The protein belongs to the peptidase S8 family.

It localises to the secreted. The chain is Subtilisin-like protease SBT5.5 from Arabidopsis thaliana (Mouse-ear cress).